The following is a 157-amino-acid chain: Ribosomal RNA large subunit methyltransferase H (157 aa).

Residues Gly-106 and 125–130 (LSEMTF) each bind S-adenosyl-L-methionine.

The protein belongs to the RNA methyltransferase RlmH family. Homodimer.

The protein localises to the cytoplasm. The enzyme catalyses pseudouridine(1915) in 23S rRNA + S-adenosyl-L-methionine = N(3)-methylpseudouridine(1915) in 23S rRNA + S-adenosyl-L-homocysteine + H(+). Its function is as follows. Specifically methylates the pseudouridine at position 1915 (m3Psi1915) in 23S rRNA. This Syntrophobacter fumaroxidans (strain DSM 10017 / MPOB) protein is Ribosomal RNA large subunit methyltransferase H.